We begin with the raw amino-acid sequence, 233 residues long: Biosynthetic peptidoglycan transglycosylase (233 aa).

The chain crosses the membrane as a helical span at residues 8 to 28 (LIALPVGIFIFFNAYVYGNII).

It belongs to the glycosyltransferase 51 family.

It localises to the cell inner membrane. The enzyme catalyses [GlcNAc-(1-&gt;4)-Mur2Ac(oyl-L-Ala-gamma-D-Glu-L-Lys-D-Ala-D-Ala)](n)-di-trans,octa-cis-undecaprenyl diphosphate + beta-D-GlcNAc-(1-&gt;4)-Mur2Ac(oyl-L-Ala-gamma-D-Glu-L-Lys-D-Ala-D-Ala)-di-trans,octa-cis-undecaprenyl diphosphate = [GlcNAc-(1-&gt;4)-Mur2Ac(oyl-L-Ala-gamma-D-Glu-L-Lys-D-Ala-D-Ala)](n+1)-di-trans,octa-cis-undecaprenyl diphosphate + di-trans,octa-cis-undecaprenyl diphosphate + H(+). It participates in cell wall biogenesis; peptidoglycan biosynthesis. In terms of biological role, peptidoglycan polymerase that catalyzes glycan chain elongation from lipid-linked precursors. In Neisseria meningitidis serogroup B (strain ATCC BAA-335 / MC58), this protein is Biosynthetic peptidoglycan transglycosylase.